The chain runs to 310 residues: Ribose-phosphate pyrophosphokinase (310 aa).

Residues 34 to 36 (DQE) and 93 to 94 (RQ) each bind ATP. Histidine 127 and aspartate 167 together coordinate Mg(2+). Lysine 190 is a catalytic residue. D-ribose 5-phosphate-binding positions include arginine 192, aspartate 216, and 220-224 (DSGGT).

Belongs to the ribose-phosphate pyrophosphokinase family. Class I subfamily. As to quaternary structure, homohexamer. Mg(2+) serves as cofactor.

It is found in the cytoplasm. The catalysed reaction is D-ribose 5-phosphate + ATP = 5-phospho-alpha-D-ribose 1-diphosphate + AMP + H(+). It functions in the pathway metabolic intermediate biosynthesis; 5-phospho-alpha-D-ribose 1-diphosphate biosynthesis; 5-phospho-alpha-D-ribose 1-diphosphate from D-ribose 5-phosphate (route I): step 1/1. Its function is as follows. Involved in the biosynthesis of the central metabolite phospho-alpha-D-ribosyl-1-pyrophosphate (PRPP) via the transfer of pyrophosphoryl group from ATP to 1-hydroxyl of ribose-5-phosphate (Rib-5-P). The polypeptide is Ribose-phosphate pyrophosphokinase (Agrobacterium fabrum (strain C58 / ATCC 33970) (Agrobacterium tumefaciens (strain C58))).